Here is a 350-residue protein sequence, read N- to C-terminus: S-adenosylmethionine:tRNA ribosyltransferase-isomerase (350 aa).

It belongs to the QueA family. As to quaternary structure, monomer.

It is found in the cytoplasm. It catalyses the reaction 7-aminomethyl-7-carbaguanosine(34) in tRNA + S-adenosyl-L-methionine = epoxyqueuosine(34) in tRNA + adenine + L-methionine + 2 H(+). Its pathway is tRNA modification; tRNA-queuosine biosynthesis. In terms of biological role, transfers and isomerizes the ribose moiety from AdoMet to the 7-aminomethyl group of 7-deazaguanine (preQ1-tRNA) to give epoxyqueuosine (oQ-tRNA). The protein is S-adenosylmethionine:tRNA ribosyltransferase-isomerase of Bacillus cereus (strain B4264).